The chain runs to 180 residues: Cell division protein SepF (180 aa).

Residues 14–81 are disordered; that stretch reads NSEDDEEFDN…SKITPISKSS (68 aa). Residues 15–35 show a composition bias toward acidic residues; that stretch reads SEDDEEFDNEDYYLDDEEEEE. A compositionally biased stretch (basic and acidic residues) spans 57 to 68; sequence TRRDTTPKEKPV. Low complexity predominate over residues 69–79; the sequence is KTTSKITPISK.

It belongs to the SepF family. As to quaternary structure, homodimer. Interacts with FtsZ.

Its subcellular location is the cytoplasm. Functionally, cell division protein that is part of the divisome complex and is recruited early to the Z-ring. Probably stimulates Z-ring formation, perhaps through the cross-linking of FtsZ protofilaments. Its function overlaps with FtsA. In Agathobacter rectalis (strain ATCC 33656 / DSM 3377 / JCM 17463 / KCTC 5835 / VPI 0990) (Eubacterium rectale), this protein is Cell division protein SepF.